The following is a 368-amino-acid chain: MNKKTIVVKFGTSTLTQGSPKLNSPHMMEIVRQIAQLHNDGFRIVIVTSGAIAAGRHYLNHPQLPPTIASKQLLAAVGQSQLIQAWEKLFAIYDIHIGQLLLTRADIEDRERFLNARDTLHALLDNHIIPVINENDAVATAEIKVGDNDNLSALVAILVQAEQLYLLTDQQGLFDSDPRKNPEAKLIPVVEQITDHIRSIAGGSGTNLGTGGMMTKIIAADVATRSGIETIIAPGNRPNVIADLAYEQNIGTKFIAHQSDRLESRKQWLFAAPSAGIITIDDGAKNAILEQNKSLLPAGIINVEGRFSRGEVVKICTQSGKDIVLGMPRYNSDALQLIKGRKSADIENVLGYEYGAVAMHRDDMIILS.

Lys9 lines the ATP pocket. Positions 49, 136, and 148 each coordinate substrate. ATP contacts are provided by residues Thr168–Asp169 and Thr210–Lys216. The PUA domain occupies Ala275 to Glu353.

Belongs to the glutamate 5-kinase family.

The protein resides in the cytoplasm. It carries out the reaction L-glutamate + ATP = L-glutamyl 5-phosphate + ADP. It participates in amino-acid biosynthesis; L-proline biosynthesis; L-glutamate 5-semialdehyde from L-glutamate: step 1/2. Its function is as follows. Catalyzes the transfer of a phosphate group to glutamate to form L-glutamate 5-phosphate. The chain is Glutamate 5-kinase from Haemophilus influenzae (strain 86-028NP).